The chain runs to 158 residues: Lectin-like protein EP153R (158 aa).

Residues 1–26 lie on the Cytoplasmic side of the membrane; that stretch reads MFLNKKYPSLIEKKMDDLMTLKFCYL. The helical transmembrane segment at 27–47 threads the bilayer; that stretch reads IITFLIITNIFSLAINIWGGG. Over 48–158 the chain is Extracellular; the sequence is DMIDRQSCEN…YTETFFICSN (111 aa). Cysteines 61 and 72 form a disulfide. The lectin-like stretch occupies residues 61–157; that stretch reads CPKDWVGYNN…KYTETFFICS (97 aa). N-linked (GlcNAc...) asparagine; by host glycans are attached at residues Asn81, Asn94, Asn100, Asn106, Asn112, Asn119, and Asn139.

This sequence belongs to the asfivirus lectin-like protein family. Homodimer.

It is found in the host endoplasmic reticulum membrane. Its function is as follows. Down-regulates MHC-I expression by impairing the appropriate configuration or presentation into the plasma membrane of the latter. Participates in viral hemadsorption, which may help viral spread. Reduces the transactivating activity of host TP53, thus inhibiting apoptosis. Non-essential for virus growth in swine macrophage cell cultures. The protein is Lectin-like protein EP153R of African swine fever virus (isolate Pig/Kenya/KEN-50/1950) (ASFV).